The primary structure comprises 201 residues: Achaete-scute complex protein T5 (201 aa).

The segment covering 1–10 (MALGSENHSV) has biased composition (polar residues). Residues 1-32 (MALGSENHSVFNDDEESSSAFNGPSVIRRNAR) are disordered. The region spanning 24 to 90 (PSVIRRNARE…KMAVEYIRRL (67 aa)) is the bHLH domain.

In terms of assembly, efficient DNA binding requires dimerization with another bHLH protein. As to expression, l(1)SC, SC and AC strongly label the presumptive stomatogastric nervous system, while ASE is more prominent in the presumptive procephalic lobe.

AS-C proteins are involved in the determination of the neuronal precursors in the peripheral nervous system and the central nervous system. The chain is Achaete-scute complex protein T5 (ac) from Drosophila melanogaster (Fruit fly).